A 147-amino-acid chain; its full sequence is Prefoldin subunit alpha (147 aa).

The protein belongs to the prefoldin subunit alpha family. As to quaternary structure, heterohexamer of two alpha and four beta subunits.

The protein localises to the cytoplasm. In terms of biological role, molecular chaperone capable of stabilizing a range of proteins. Seems to fulfill an ATP-independent, HSP70-like function in archaeal de novo protein folding. In Saccharolobus solfataricus (strain ATCC 35092 / DSM 1617 / JCM 11322 / P2) (Sulfolobus solfataricus), this protein is Prefoldin subunit alpha (pfdA).